The sequence spans 1004 residues: MQSCGRWWGRLAARGAPRHLRPAAGGPRRQQQRWGGGEAARCIEQLLPRHDDFCRRHIGPREREKREMLSAVGVQSVEELMDKTIPASIRLRRPLRMDDHVVENEILETLYNIASKNKIWRSYIGMGYYNCSVPQPIARNLLENAGWVTQYTPYQPEVSQGRLESLLNYQTMVCDITGMDVANASLLDEGTAAAEAMQLCHRQNKRRKFYIDARCHPQTIANYTGVITELKLPHEMDFSGKDVSGVLFQYPDTEGKVEDFSELIERAHQNGTLACCATDLLALCILKPPGEFGVDVVLGSSQRFGVPLCYGGPHAAFFAVKENLVRMMPGRMVGVTRDANGKEVYRLALQTREQHIRRDKATSNICTAQALLANMAAMYGVYHGSDGLKDIARRVHNATLILAEGLRRAGHKLHHDLFFDTLTVTCGCSVKEVLDRAALRKINVRIYSDGRLGVSLDETVNEKDLDDILWIFGCESSAELVAEGMGEETKGILSTPFKRTSKFLTHQVFNSYHSETNIVRYMKRLENKDISLVHSMIPLGSCTMKLNSSAELAPISWKEFANIHPFVPLDQAQGYQQLFKDLEKDLCEITGYDKISFQPNSGAQGEYAGLAAIKAYLNAKGERHRSVCLIPRSAHGTNPASAQMAGMKIQPIEVDKNGSIDISHLKAMVDKHKENLAAIMITYPSTNGVFEEEIGDVCDLIHKHGGQVYLDGANMNAQVGLCRPGDYGSDVSHLNLHKTFCIPHGGGGPGMGPIGVKKHLAPYLPTHPVIKIQTDKDACPLGTVSAAPWGSSAILPISWVYIKTMGAKGLKHASEIAILNANYMAKRLEKHYKILFRGVRGYVAHEFILDTRPFKKTANIEAVDLAKRLQDYGFHAPTMSWPVAGTLMIEPTESEDKGELDRFCDAMISIRQEIADIEEGRMDPQVNPLKMSPHTLNCVTSSKWDRPYSREVAAFPLPFVKPESKFWPTIARIDDIYGDQHLVCTCPPMEAYESPFSEQKRASS.

The residue at position 738 (lysine 738) is an N6-(pyridoxal phosphate)lysine.

The protein belongs to the GcvP family. Homodimer. Interacts with GCSH. The glycine cleavage system is composed of four proteins: P (GLDC), T (GCST), L (DLD) and H (GCSH). Requires pyridoxal 5'-phosphate as cofactor. Liver (at protein level).

The protein resides in the mitochondrion. The enzyme catalyses N(6)-[(R)-lipoyl]-L-lysyl-[glycine-cleavage complex H protein] + glycine + H(+) = N(6)-[(R)-S(8)-aminomethyldihydrolipoyl]-L-lysyl-[glycine-cleavage complex H protein] + CO2. Stimulated by lipoic acid. Inhibited in presence of methylamine. The glycine cleavage system catalyzes the degradation of glycine. The P protein (GLDC) binds the alpha-amino group of glycine through its pyridoxal phosphate cofactor; CO(2) is released and the remaining methylamine moiety is then transferred to the lipoamide cofactor of the H protein (GCSH). The sequence is that of Glycine dehydrogenase (decarboxylating), mitochondrial from Gallus gallus (Chicken).